A 189-amino-acid chain; its full sequence is Segregation and condensation protein B (189 aa).

This sequence belongs to the ScpB family. In terms of assembly, homodimer. Homodimerization may be required to stabilize the binding of ScpA to the Smc head domains. Component of a cohesin-like complex composed of ScpA, ScpB and the Smc homodimer, in which ScpA and ScpB bind to the head domain of Smc. The presence of the three proteins is required for the association of the complex with DNA.

It localises to the cytoplasm. Functionally, participates in chromosomal partition during cell division. May act via the formation of a condensin-like complex containing Smc and ScpA that pull DNA away from mid-cell into both cell halves. This is Segregation and condensation protein B from Streptococcus mitis.